A 339-amino-acid chain; its full sequence is Phosphatidylglycerol--prolipoprotein diacylglyceryl transferase (339 aa).

Helical transmembrane passes span 43–63, 81–101, and 121–141; these read FTIA…YWLG, ILWM…LTSW, and NGGI…IYFA. Position 167 (R167) interacts with a 1,2-diacyl-sn-glycero-3-phospho-(1'-sn-glycerol). Transmembrane regions (helical) follow at residues 231 to 251 and 300 to 320; these read FTQL…YFWL and LWTD…WMLW.

The protein belongs to the Lgt family.

It localises to the cell membrane. The catalysed reaction is L-cysteinyl-[prolipoprotein] + a 1,2-diacyl-sn-glycero-3-phospho-(1'-sn-glycerol) = an S-1,2-diacyl-sn-glyceryl-L-cysteinyl-[prolipoprotein] + sn-glycerol 1-phosphate + H(+). The protein operates within protein modification; lipoprotein biosynthesis (diacylglyceryl transfer). Catalyzes the transfer of the diacylglyceryl group from phosphatidylglycerol to the sulfhydryl group of the N-terminal cysteine of a prolipoprotein, the first step in the formation of mature lipoproteins. This is Phosphatidylglycerol--prolipoprotein diacylglyceryl transferase from Deinococcus radiodurans (strain ATCC 13939 / DSM 20539 / JCM 16871 / CCUG 27074 / LMG 4051 / NBRC 15346 / NCIMB 9279 / VKM B-1422 / R1).